The following is a 316-amino-acid chain: 4-hydroxy-3-methylbut-2-enyl diphosphate reductase (316 aa).

C12 is a [4Fe-4S] cluster binding site. Positions 41 and 74 each coordinate (2E)-4-hydroxy-3-methylbut-2-enyl diphosphate. The dimethylallyl diphosphate site is built by H41 and H74. 2 residues coordinate isopentenyl diphosphate: H41 and H74. Residue C96 coordinates [4Fe-4S] cluster. H124 is a binding site for (2E)-4-hydroxy-3-methylbut-2-enyl diphosphate. H124 is a binding site for dimethylallyl diphosphate. H124 is an isopentenyl diphosphate binding site. The Proton donor role is filled by E126. (2E)-4-hydroxy-3-methylbut-2-enyl diphosphate is bound at residue T167. C197 contacts [4Fe-4S] cluster. S225, S226, N227, and S269 together coordinate (2E)-4-hydroxy-3-methylbut-2-enyl diphosphate. Dimethylallyl diphosphate-binding residues include S225, S226, N227, and S269. Residues S225, S226, N227, and S269 each coordinate isopentenyl diphosphate.

Belongs to the IspH family. In terms of assembly, homodimer. The cofactor is [4Fe-4S] cluster.

It catalyses the reaction isopentenyl diphosphate + 2 oxidized [2Fe-2S]-[ferredoxin] + H2O = (2E)-4-hydroxy-3-methylbut-2-enyl diphosphate + 2 reduced [2Fe-2S]-[ferredoxin] + 2 H(+). The enzyme catalyses dimethylallyl diphosphate + 2 oxidized [2Fe-2S]-[ferredoxin] + H2O = (2E)-4-hydroxy-3-methylbut-2-enyl diphosphate + 2 reduced [2Fe-2S]-[ferredoxin] + 2 H(+). Its pathway is isoprenoid biosynthesis; dimethylallyl diphosphate biosynthesis; dimethylallyl diphosphate from (2E)-4-hydroxy-3-methylbutenyl diphosphate: step 1/1. It functions in the pathway isoprenoid biosynthesis; isopentenyl diphosphate biosynthesis via DXP pathway; isopentenyl diphosphate from 1-deoxy-D-xylulose 5-phosphate: step 6/6. Its function is as follows. Catalyzes the conversion of 1-hydroxy-2-methyl-2-(E)-butenyl 4-diphosphate (HMBPP) into a mixture of isopentenyl diphosphate (IPP) and dimethylallyl diphosphate (DMAPP). Acts in the terminal step of the DOXP/MEP pathway for isoprenoid precursor biosynthesis. This Shigella flexneri serotype 5b (strain 8401) protein is 4-hydroxy-3-methylbut-2-enyl diphosphate reductase.